A 793-amino-acid polypeptide reads, in one-letter code: Ferredoxin/F(420)H(2)-dependent CoB-CoM heterodisulfide reductase subunit A (793 aa).

147-170 (GGGVAGIEAALNLAEAGFPVTMVE) contributes to the FAD binding site. 4Fe-4S ferredoxin-type domains follow at residues 233–264 (RKPR…PMNY), 282–311 (QVVL…YEQK), 571–600 (MGAH…IENK), and 601–629 (KAVV…MRNF). [4Fe-4S] cluster is bound by residues cysteine 243, cysteine 246, cysteine 250, cysteine 254, cysteine 291, cysteine 294, cysteine 297, cysteine 301, cysteine 580, cysteine 583, cysteine 586, cysteine 590, cysteine 609, cysteine 612, cysteine 615, and cysteine 619.

Belongs to the HdrA family. As to quaternary structure, the ferredoxin/F(420)H(2)-dependent CoB-CoM heterodisulfide reductase is composed of three subunits; HdrA2, HdrB2 and HdrC2. [4Fe-4S] cluster is required as a cofactor. Requires [2Fe-2S] cluster as cofactor. The cofactor is FAD.

The protein localises to the cytoplasm. It carries out the reaction coenzyme B + coenzyme M + 2 oxidized [2Fe-2S]-[ferredoxin] = coenzyme M-coenzyme B heterodisulfide + 2 reduced [2Fe-2S]-[ferredoxin] + 2 H(+). The enzyme catalyses coenzyme B + 2 oxidized coenzyme F420-(gamma-L-Glu)(n) + coenzyme M + 2 reduced [2Fe-2S]-[ferredoxin] + 4 H(+) = coenzyme M-coenzyme B heterodisulfide + 2 reduced coenzyme F420-(gamma-L-Glu)(n) + 2 oxidized [2Fe-2S]-[ferredoxin]. Its pathway is cofactor metabolism; coenzyme M-coenzyme B heterodisulfide reduction; coenzyme B and coenzyme M from coenzyme M-coenzyme B heterodisulfide: step 1/1. Part of a complex that catalyzes the reversible reduction of CoM-S-S-CoB to the thiol-coenzymes H-S-CoM (coenzyme M) and H-S-CoB (coenzyme B). Catalyzes the transfer of electrons from ferredoxin to CoM-S-S-CoB during methanogenesis from acetate. Electrons transfer from ferredoxin to CoM-S-S-CoB via HdrA2, HdrC2 and HdrB2. In addition, the complex can use electron bifurcation to direct electron pairs from reduced coenzyme F420 towards the reduction of both ferredoxin and CoB-CoM heterodisulfide. This activity may take place during Fe(III)-dependent anaerobic methane oxidation. This chain is Ferredoxin/F(420)H(2)-dependent CoB-CoM heterodisulfide reductase subunit A, found in Methanosarcina acetivorans (strain ATCC 35395 / DSM 2834 / JCM 12185 / C2A).